The primary structure comprises 206 residues: Thymidylate kinase (206 aa).

10 to 17 (GVDGVGKT) is an ATP binding site.

It belongs to the thymidylate kinase family.

It carries out the reaction dTMP + ATP = dTDP + ADP. In terms of biological role, phosphorylation of dTMP to form dTDP in both de novo and salvage pathways of dTTP synthesis. In Bifidobacterium longum (strain DJO10A), this protein is Thymidylate kinase.